Reading from the N-terminus, the 714-residue chain is Elongation factor G-like protein (714 aa).

A tr-type G domain is found at 21-289 (GGVRNVVLVG…VATRGFPSPM (269 aa)). A G1 region spans residues 30-37 (GPSGGGKT). 30-37 (GPSGGGKT) contacts GTP. Residues 73-77 (QRSVG) form a G2 region. Positions 94-97 (DTPG) are G3. Residues 94–98 (DTPGY) and 148–151 (TKLD) contribute to the GTP site. The segment at 148-151 (TKLD) is G4. The interval 267-269 (CSS) is G5.

The protein belongs to the TRAFAC class translation factor GTPase superfamily. Classic translation factor GTPase family. EF-G/EF-2 subfamily.

The chain is Elongation factor G-like protein from Mycobacterium tuberculosis (strain ATCC 25618 / H37Rv).